A 209-amino-acid polypeptide reads, in one-letter code: MSKVTQISHPLILHKLAFMRDKKTGSKDFREMVEEVAMLMAYEVTREMQLETVEIETPICITKCKMLAGKKVAIVPILRAGLGMVNGVLKLIPAAKVGHIGLYRDEKTLKPVEYFCKLPQDIEERDIIVTDPMLATGGSAIDAITLLKKRGAKYIRLMCLIGAPEGIAAVQEAHPDVDIYLASIDEKLDENGYIVPGLGDAGDRLFGTK.

5-phospho-alpha-D-ribose 1-diphosphate contacts are provided by residues R79, R104, and 131–139; that span reads DPMLATGGS. Uracil contacts are provided by residues I194 and 199–201; that span reads GDA. D200 is a 5-phospho-alpha-D-ribose 1-diphosphate binding site.

It belongs to the UPRTase family. The cofactor is Mg(2+).

It carries out the reaction UMP + diphosphate = 5-phospho-alpha-D-ribose 1-diphosphate + uracil. It participates in pyrimidine metabolism; UMP biosynthesis via salvage pathway; UMP from uracil: step 1/1. Allosterically activated by GTP. Its function is as follows. Catalyzes the conversion of uracil and 5-phospho-alpha-D-ribose 1-diphosphate (PRPP) to UMP and diphosphate. This is Uracil phosphoribosyltransferase from Clostridium acetobutylicum (strain ATCC 824 / DSM 792 / JCM 1419 / IAM 19013 / LMG 5710 / NBRC 13948 / NRRL B-527 / VKM B-1787 / 2291 / W).